Reading from the N-terminus, the 117-residue chain is Phosphoribosyl-ATP pyrophosphatase (117 aa).

This sequence belongs to the PRA-PH family.

It is found in the cytoplasm. It catalyses the reaction 1-(5-phospho-beta-D-ribosyl)-ATP + H2O = 1-(5-phospho-beta-D-ribosyl)-5'-AMP + diphosphate + H(+). The protein operates within amino-acid biosynthesis; L-histidine biosynthesis; L-histidine from 5-phospho-alpha-D-ribose 1-diphosphate: step 2/9. The sequence is that of Phosphoribosyl-ATP pyrophosphatase from Rhodospirillum rubrum (strain ATCC 11170 / ATH 1.1.1 / DSM 467 / LMG 4362 / NCIMB 8255 / S1).